Consider the following 129-residue polypeptide: Small ribosomal subunit protein uS11 (129 aa).

This sequence belongs to the universal ribosomal protein uS11 family. In terms of assembly, part of the 30S ribosomal subunit. Interacts with proteins S7 and S18. Binds to IF-3.

Its function is as follows. Located on the platform of the 30S subunit, it bridges several disparate RNA helices of the 16S rRNA. Forms part of the Shine-Dalgarno cleft in the 70S ribosome. This is Small ribosomal subunit protein uS11 from Staphylococcus saprophyticus subsp. saprophyticus (strain ATCC 15305 / DSM 20229 / NCIMB 8711 / NCTC 7292 / S-41).